A 306-amino-acid polypeptide reads, in one-letter code: Deoxyribokinase (306 aa).

Substrate contacts are provided by residues 10–12 (MVD), 38–42 (GKGAN), and Glu-139. Residues Asn-184 and 220–225 (TMGEKG) each bind ATP. K(+) is bound by residues Asp-246 and Ser-248. 251–252 (GD) contributes to the ATP binding site. Asp-252 contacts substrate. Asp-252 functions as the Proton acceptor in the catalytic mechanism. K(+) contacts are provided by Ser-282, Gly-285, Gly-287, and Ser-291.

This sequence belongs to the carbohydrate kinase PfkB family. Deoxyribokinase subfamily. Homodimer. Mg(2+) is required as a cofactor.

It localises to the cytoplasm. It catalyses the reaction 2-deoxy-D-ribose + ATP = 2-deoxy-D-ribose 5-phosphate + ADP + H(+). Catalyzes the ATP-dependent phosphorylation of 2-deoxy-D-ribose to 2-deoxy-D-ribose 5-phosphate (dRib-5P), allowing the use of deoxyribose as the sole carbon source. Can also use D-ribose, with much lower efficiency. The chain is Deoxyribokinase from Salmonella typhi.